The chain runs to 310 residues: Cytochrome P450 monooxygenase ppzG (310 aa).

Cysteine 288 contacts heme.

This sequence belongs to the cytochrome P450 family. The cofactor is heme.

It participates in secondary metabolite biosynthesis. Functionally, cytochrome P450 monooxygenase; part of the gene cluster that mediates the biosynthesis of pyrrolopyrazines, secondary metabolites showing insecticidal activity. The role of ppzG within the pathway has still to be determined. The single multifunctional NRPS ppzA is sufficient to produce peramine via condensation of 1-pyrroline-5-carboxylate and arginine, N-methylation of the alpha-amino group of arginine and reduction of the thioester and the cyclization to form an iminium ion resulting in release from the peptide synthetase. Deprotonation of this intermediate and oxidation of the pyrroline ring would give rise to peramine. In Epichloe species that produce only peramine, the peramine synthetase gene is not localized in a gene cluster, in contrast to Metarhizium species that contain additional pyrrolopyrazine biosynthesis genes. The 2-oxoglutarate-Fe(II) type oxidoreductase ppzC hydroxylates peramine to yield the newly identified compound 8-hydroxyperamine whereas ppzD converts L-proline into trans-4-hydroxy-L-proline, a precursor of peramine biosynthesis. The chain is Cytochrome P450 monooxygenase ppzG (ppzG) from Metarhizium majus (strain ARSEF 297).